The following is a 704-amino-acid chain: Elongation factor G (704 aa).

The 284-residue stretch at 8–291 (DKVRNIGIMA…AVIDYLASPV (284 aa)) folds into the tr-type G domain. GTP-binding positions include 17–24 (AHIDAGKT), 90–94 (DTPGH), and 144–147 (NKMD).

The protein belongs to the TRAFAC class translation factor GTPase superfamily. Classic translation factor GTPase family. EF-G/EF-2 subfamily.

Its subcellular location is the cytoplasm. Functionally, catalyzes the GTP-dependent ribosomal translocation step during translation elongation. During this step, the ribosome changes from the pre-translocational (PRE) to the post-translocational (POST) state as the newly formed A-site-bound peptidyl-tRNA and P-site-bound deacylated tRNA move to the P and E sites, respectively. Catalyzes the coordinated movement of the two tRNA molecules, the mRNA and conformational changes in the ribosome. The chain is Elongation factor G from Chlorobaculum parvum (strain DSM 263 / NCIMB 8327) (Chlorobium vibrioforme subsp. thiosulfatophilum).